A 612-amino-acid polypeptide reads, in one-letter code: UBA domain-containing protein 6 (612 aa).

In terms of domain architecture, UBA spans 3–42; sequence DLDTKIKTLKNMGVSESDAKDSLERCGYDVESAAEFIFSG. Position 595 is a phosphoserine (Ser595).

Its subcellular location is the cytoplasm. It localises to the nucleus. The chain is UBA domain-containing protein 6 (ucp6) from Schizosaccharomyces pombe (strain 972 / ATCC 24843) (Fission yeast).